Reading from the N-terminus, the 362-residue chain is 2-aminoethylphosphonate--pyruvate transaminase (362 aa).

At lysine 193 the chain carries N6-(pyridoxal phosphate)lysine.

Belongs to the class-V pyridoxal-phosphate-dependent aminotransferase family. PhnW subfamily. Homodimer. Pyridoxal 5'-phosphate is required as a cofactor.

The enzyme catalyses (2-aminoethyl)phosphonate + pyruvate = phosphonoacetaldehyde + L-alanine. Functionally, involved in phosphonate degradation. This Phocaeicola vulgatus (strain ATCC 8482 / DSM 1447 / JCM 5826 / CCUG 4940 / NBRC 14291 / NCTC 11154) (Bacteroides vulgatus) protein is 2-aminoethylphosphonate--pyruvate transaminase.